A 379-amino-acid polypeptide reads, in one-letter code: Epoxyqueuosine reductase (379 aa).

Residue D139 is the Proton donor of the active site. In terms of domain architecture, 4Fe-4S ferredoxin-type spans 181–213 (IPLPVDQPVEEGCGKCVACMTICPTGAIVEPYT). The [4Fe-4S] cluster site is built by C193, C196, C199, C203, C219, C246, C249, and C253.

It belongs to the QueG family. As to quaternary structure, monomer. It depends on cob(II)alamin as a cofactor. [4Fe-4S] cluster serves as cofactor.

The protein localises to the cytoplasm. It catalyses the reaction epoxyqueuosine(34) in tRNA + AH2 = queuosine(34) in tRNA + A + H2O. Its pathway is tRNA modification; tRNA-queuosine biosynthesis. Its function is as follows. Catalyzes the conversion of epoxyqueuosine (oQ) to queuosine (Q), which is a hypermodified base found in the wobble positions of tRNA(Asp), tRNA(Asn), tRNA(His) and tRNA(Tyr). The chain is Epoxyqueuosine reductase from Shigella dysenteriae serotype 1 (strain Sd197).